The following is a 440-amino-acid chain: UDP-N-acetylmuramoylalanine--D-glutamate ligase (440 aa).

109-115 serves as a coordination point for ATP; that stretch reads GTNGKTT.

This sequence belongs to the MurCDEF family.

The protein resides in the cytoplasm. The catalysed reaction is UDP-N-acetyl-alpha-D-muramoyl-L-alanine + D-glutamate + ATP = UDP-N-acetyl-alpha-D-muramoyl-L-alanyl-D-glutamate + ADP + phosphate + H(+). The protein operates within cell wall biogenesis; peptidoglycan biosynthesis. Cell wall formation. Catalyzes the addition of glutamate to the nucleotide precursor UDP-N-acetylmuramoyl-L-alanine (UMA). This chain is UDP-N-acetylmuramoylalanine--D-glutamate ligase, found in Rubrobacter xylanophilus (strain DSM 9941 / JCM 11954 / NBRC 16129 / PRD-1).